Here is a 528-residue protein sequence, read N- to C-terminus: Protein WHAT'S THIS FACTOR 1 homolog, chloroplastic (528 aa).

The transit peptide at 1 to 73 (MEPKLLLSAH…KTRVVVEPVR (73 aa)) directs the protein to the chloroplast. Residues 80-408 (KELTFDSVVQ…VKEKMRALVS (329 aa)) enclose the PORR domain. A disordered region spans residues 410–528 (PRFPRRGGPR…FPDGTPREKW (119 aa)). Basic and acidic residues predominate over residues 418-428 (PRKDEEGREVE). The span at 429-491 (IDGSDADGEE…DDDDEDEEED (63 aa)) shows a compositional bias: acidic residues.

It localises to the plastid. Its subcellular location is the chloroplast. RNA-binding protein involved in group II intron splicing. Binds specific group II introns and promotes their splicing. Functions in the context of a heterodimer with the ribonuclease III domain-containing protein RNC1. In Arabidopsis thaliana (Mouse-ear cress), this protein is Protein WHAT'S THIS FACTOR 1 homolog, chloroplastic.